Reading from the N-terminus, the 230-residue chain is Large ribosomal subunit protein uL1 (230 aa).

This sequence belongs to the universal ribosomal protein uL1 family. As to quaternary structure, part of the 50S ribosomal subunit.

Its function is as follows. Binds directly to 23S rRNA. The L1 stalk is quite mobile in the ribosome, and is involved in E site tRNA release. Functionally, protein L1 is also a translational repressor protein, it controls the translation of the L11 operon by binding to its mRNA. The polypeptide is Large ribosomal subunit protein uL1 (Leuconostoc citreum (strain KM20)).